Here is a 323-residue protein sequence, read N- to C-terminus: Pantothenate kinase (323 aa).

Residues methionine 1–valine 12 are compositionally biased toward polar residues. A disordered region spans residues methionine 1 to tyrosine 24. Glycine 108–serine 115 contributes to the ATP binding site.

Belongs to the prokaryotic pantothenate kinase family.

The protein localises to the cytoplasm. The enzyme catalyses (R)-pantothenate + ATP = (R)-4'-phosphopantothenate + ADP + H(+). It functions in the pathway cofactor biosynthesis; coenzyme A biosynthesis; CoA from (R)-pantothenate: step 1/5. In Corynebacterium glutamicum (strain R), this protein is Pantothenate kinase.